Reading from the N-terminus, the 272-residue chain is ATP phosphoribosyltransferase regulatory subunit (272 aa).

The protein belongs to the class-II aminoacyl-tRNA synthetase family. HisZ subfamily. As to quaternary structure, heteromultimer composed of HisG and HisZ subunits.

The protein localises to the cytoplasm. It participates in amino-acid biosynthesis; L-histidine biosynthesis; L-histidine from 5-phospho-alpha-D-ribose 1-diphosphate: step 1/9. Its function is as follows. Required for the first step of histidine biosynthesis. May allow the feedback regulation of ATP phosphoribosyltransferase activity by histidine. The chain is ATP phosphoribosyltransferase regulatory subunit from Staphylococcus aureus (strain Mu3 / ATCC 700698).